The following is a 409-amino-acid chain: Peptidase T (409 aa).

Histidine 78 contributes to the Zn(2+) binding site. Aspartate 80 is a catalytic residue. Aspartate 140 provides a ligand contact to Zn(2+). Glutamate 173 acts as the Proton acceptor in catalysis. The Zn(2+) site is built by glutamate 174, aspartate 196, and histidine 379.

It belongs to the peptidase M20B family. It depends on Zn(2+) as a cofactor.

Its subcellular location is the cytoplasm. It carries out the reaction Release of the N-terminal residue from a tripeptide.. In terms of biological role, cleaves the N-terminal amino acid of tripeptides. This Escherichia coli O139:H28 (strain E24377A / ETEC) protein is Peptidase T.